The sequence spans 381 residues: Alkanesulfonate monooxygenase (381 aa).

This sequence belongs to the SsuD family. Homotetramer.

It catalyses the reaction an alkanesulfonate + FMNH2 + O2 = an aldehyde + FMN + sulfite + H2O + 2 H(+). Catalyzes the desulfonation of aliphatic sulfonates. This chain is Alkanesulfonate monooxygenase, found in Escherichia coli O6:K15:H31 (strain 536 / UPEC).